Reading from the N-terminus, the 637-residue chain is Chaperone protein HtpG (637 aa).

The a; substrate-binding stretch occupies residues 1–338 (MTSTIDKNGA…SADLPLNISR (338 aa)). Positions 339–552 (EMIQESPILA…ESGPDRQLEK (214 aa)) are b. The tract at residues 553–637 (ILLGVGQLAG…LRRSSAGGGD (85 aa)) is c.

The protein belongs to the heat shock protein 90 family. As to quaternary structure, homodimer.

Its subcellular location is the cytoplasm. Its function is as follows. Molecular chaperone. Has ATPase activity. The sequence is that of Chaperone protein HtpG from Nitrobacter winogradskyi (strain ATCC 25391 / DSM 10237 / CIP 104748 / NCIMB 11846 / Nb-255).